A 690-amino-acid chain; its full sequence is Polyribonucleotide nucleotidyltransferase (690 aa).

Mg(2+)-binding residues include Asp483 and Asp489. One can recognise a KH domain in the interval 550-609 (PKMEQITVDKKDIAAVIGKGGATIREIVEKSGAKLDVNDEGVVTVAAPDEESRNIAMQMI). In terms of domain architecture, S1 motif spans 619–686 (NKIYSGKVMK…DRGKVKLSMK (68 aa)).

Belongs to the polyribonucleotide nucleotidyltransferase family. Mg(2+) is required as a cofactor.

It localises to the cytoplasm. The catalysed reaction is RNA(n+1) + phosphate = RNA(n) + a ribonucleoside 5'-diphosphate. Involved in mRNA degradation. Catalyzes the phosphorolysis of single-stranded polyribonucleotides processively in the 3'- to 5'-direction. The chain is Polyribonucleotide nucleotidyltransferase from Pelagibacter ubique (strain HTCC1062).